The chain runs to 38 residues: Large ribosomal subunit protein bL36 (38 aa).

It belongs to the bacterial ribosomal protein bL36 family.

This chain is Large ribosomal subunit protein bL36, found in Prochlorococcus marinus (strain MIT 9312).